The primary structure comprises 121 residues: Class I hydrophobin 2 (121 aa).

Residues 1 to 18 (MQFTTIVMTLAAAVAVTA) form the signal peptide. 4 disulfide bridges follow: C52–C101, C60–C94, C61–C79, and C102–C116. N83 is a glycosylation site (N-linked (GlcNAc...) asparagine).

Belongs to the fungal hydrophobin family. As to quaternary structure, self-assembles to form functional amyloid fibrils called rodlets. Self-assembly into fibrillar rodlets occurs spontaneously at hydrophobic:hydrophilic interfaces and the rodlets further associate laterally to form amphipathic monolayers. Expressed in conidia and aerial hyphae.

The protein resides in the secreted. It is found in the cell wall. Functionally, aerial growth, conidiation, and dispersal of filamentous fungi in the environment rely upon a capability of their secreting small amphipathic proteins called hydrophobins (HPBs) with low sequence identity. Class I can self-assemble into an outermost layer of rodlet bundles on aerial cell surfaces, conferring cellular hydrophobicity that supports fungal growth, development and dispersal; whereas Class II form highly ordered films at water-air interfaces through intermolecular interactions but contribute nothing to the rodlet structure. Hcf-2 is a class I hydrophobin that is not necessary for the development of hyphae or conidia but contributes to cell surface hydrophobicity. The sequence is that of Class I hydrophobin 2 from Passalora fulva (Tomato leaf mold).